The following is a 509-amino-acid chain: ATP synthase subunit alpha (509 aa).

Residue 169–176 (GDRQTGKT) coordinates ATP.

Belongs to the ATPase alpha/beta chains family. In terms of assembly, F-type ATPases have 2 components, CF(1) - the catalytic core - and CF(0) - the membrane proton channel. CF(1) has five subunits: alpha(3), beta(3), gamma(1), delta(1), epsilon(1). CF(0) has three main subunits: a(1), b(2) and c(9-12). The alpha and beta chains form an alternating ring which encloses part of the gamma chain. CF(1) is attached to CF(0) by a central stalk formed by the gamma and epsilon chains, while a peripheral stalk is formed by the delta and b chains.

The protein localises to the cell inner membrane. The enzyme catalyses ATP + H2O + 4 H(+)(in) = ADP + phosphate + 5 H(+)(out). Its function is as follows. Produces ATP from ADP in the presence of a proton gradient across the membrane. The alpha chain is a regulatory subunit. The sequence is that of ATP synthase subunit alpha from Xanthobacter autotrophicus (strain ATCC BAA-1158 / Py2).